The primary structure comprises 613 residues: tRNA 5-methylaminomethyl-2-thiouridine biosynthesis bifunctional protein MnmC (613 aa).

The tract at residues methionine 1 to glutamate 225 is tRNA (mnm(5)s(2)U34)-methyltransferase. Residues isoleucine 252–leucine 613 are FAD-dependent cmnm(5)s(2)U34 oxidoreductase.

In the N-terminal section; belongs to the methyltransferase superfamily. tRNA (mnm(5)s(2)U34)-methyltransferase family. The protein in the C-terminal section; belongs to the DAO family. FAD is required as a cofactor.

The protein resides in the cytoplasm. The catalysed reaction is 5-aminomethyl-2-thiouridine(34) in tRNA + S-adenosyl-L-methionine = 5-methylaminomethyl-2-thiouridine(34) in tRNA + S-adenosyl-L-homocysteine + H(+). In terms of biological role, catalyzes the last two steps in the biosynthesis of 5-methylaminomethyl-2-thiouridine (mnm(5)s(2)U) at the wobble position (U34) in tRNA. Catalyzes the FAD-dependent demodification of cmnm(5)s(2)U34 to nm(5)s(2)U34, followed by the transfer of a methyl group from S-adenosyl-L-methionine to nm(5)s(2)U34, to form mnm(5)s(2)U34. The chain is tRNA 5-methylaminomethyl-2-thiouridine biosynthesis bifunctional protein MnmC from Campylobacter jejuni subsp. doylei (strain ATCC BAA-1458 / RM4099 / 269.97).